Consider the following 544-residue polypeptide: Chaperonin GroEL (544 aa).

ATP contacts are provided by residues 29 to 32, 86 to 90, Gly413, 476 to 478, and Asp492; these read TLGP, DGTTT, and NAA.

This sequence belongs to the chaperonin (HSP60) family. In terms of assembly, forms a cylinder of 14 subunits composed of two heptameric rings stacked back-to-back. Interacts with the co-chaperonin GroES.

Its subcellular location is the cytoplasm. The enzyme catalyses ATP + H2O + a folded polypeptide = ADP + phosphate + an unfolded polypeptide.. In terms of biological role, together with its co-chaperonin GroES, plays an essential role in assisting protein folding. The GroEL-GroES system forms a nano-cage that allows encapsulation of the non-native substrate proteins and provides a physical environment optimized to promote and accelerate protein folding. This Bacillus licheniformis (strain ATCC 14580 / DSM 13 / JCM 2505 / CCUG 7422 / NBRC 12200 / NCIMB 9375 / NCTC 10341 / NRRL NRS-1264 / Gibson 46) protein is Chaperonin GroEL.